Consider the following 284-residue polypeptide: 2-dehydro-3-deoxyphosphooctonate aldolase (284 aa).

It belongs to the KdsA family.

The protein resides in the cytoplasm. It carries out the reaction D-arabinose 5-phosphate + phosphoenolpyruvate + H2O = 3-deoxy-alpha-D-manno-2-octulosonate-8-phosphate + phosphate. It participates in carbohydrate biosynthesis; 3-deoxy-D-manno-octulosonate biosynthesis; 3-deoxy-D-manno-octulosonate from D-ribulose 5-phosphate: step 2/3. It functions in the pathway bacterial outer membrane biogenesis; lipopolysaccharide biosynthesis. This Histophilus somni (strain 2336) (Haemophilus somnus) protein is 2-dehydro-3-deoxyphosphooctonate aldolase.